Consider the following 251-residue polypeptide: MAEPRTLVLLRHGNSDWNQKNLFTGWVDVELSEQGVAEGQRAGELLAESGILPDVLHTSVLIRAIDTANIALKRAGRSWIPVQRTWRLNERHYGALQGKDKAQTLAEYGPEQFATWRRSFDVPPPPIDDDDEYSQSRDPRYADLGDALPRTECLKDVIERMLPYWESDIQPDLASGRTVLVTAHGNSLRALVKHLDGISDADIAELNIPTGIPLVYRLDEDYRPIVPGGEYLDPEAAAAGAAAVAAQGSKK.

Substrate-binding positions include 11-18 (RHGNSDWN), 24-25 (TG), arginine 63, 90-93 (ERHY), lysine 101, 117-118 (RR), and 185-186 (GN). Histidine 12 serves as the catalytic Tele-phosphohistidine intermediate. Glutamate 90 functions as the Proton donor/acceptor in the catalytic mechanism. The interval 117–142 (RRSFDVPPPPIDDDDEYSQSRDPRYA) is disordered.

The protein belongs to the phosphoglycerate mutase family. BPG-dependent PGAM subfamily.

It catalyses the reaction (2R)-2-phosphoglycerate = (2R)-3-phosphoglycerate. Its pathway is carbohydrate degradation; glycolysis; pyruvate from D-glyceraldehyde 3-phosphate: step 3/5. In terms of biological role, catalyzes the interconversion of 2-phosphoglycerate and 3-phosphoglycerate. This is 2,3-bisphosphoglycerate-dependent phosphoglycerate mutase from Clavibacter michiganensis subsp. michiganensis (strain NCPPB 382).